The following is a 278-amino-acid chain: Tryptophan synthase alpha chain (278 aa).

Residues Glu61 and Asp72 each act as proton acceptor in the active site.

This sequence belongs to the TrpA family. As to quaternary structure, tetramer of two alpha and two beta chains.

The enzyme catalyses (1S,2R)-1-C-(indol-3-yl)glycerol 3-phosphate + L-serine = D-glyceraldehyde 3-phosphate + L-tryptophan + H2O. The protein operates within amino-acid biosynthesis; L-tryptophan biosynthesis; L-tryptophan from chorismate: step 5/5. Its function is as follows. The alpha subunit is responsible for the aldol cleavage of indoleglycerol phosphate to indole and glyceraldehyde 3-phosphate. This chain is Tryptophan synthase alpha chain, found in Shewanella oneidensis (strain ATCC 700550 / JCM 31522 / CIP 106686 / LMG 19005 / NCIMB 14063 / MR-1).